The chain runs to 960 residues: Endoplasmic reticulum aminopeptidase 2 (960 aa).

Residues 1–20 (MFHSSAMVNSHRKPMFNIHR) are Cytoplasmic-facing. A helical; Signal-anchor for type II membrane protein transmembrane segment spans residues 21 to 40 (GFYCLTAILPQICICSQFSV). At 41 to 960 (PSSYHFTEDP…TLRTWLMVNT (920 aa)) the chain is on the lumenal side. 2 N-linked (GlcNAc...) asparagine glycosylation sites follow: Asn85 and Asn119. Glu200 contacts substrate. N-linked (GlcNAc...) asparagine glycosylation is present at Asn219. 334–338 (GAMEN) contributes to the substrate binding site. His370 is a Zn(2+) binding site. Residue Glu371 is the Proton acceptor of the active site. Positions 374 and 393 each coordinate Zn(2+). N-linked (GlcNAc...) asparagine glycosylation is present at Asn405. Cysteines 421 and 460 form a disulfide. The N-linked (GlcNAc...) asparagine glycan is linked to Asn650. A disulfide bridge links Cys759 with Cys766.

It belongs to the peptidase M1 family. In terms of assembly, heterodimer with ERAP1. Requires Zn(2+) as cofactor. Post-translationally, N-glycosylated. In terms of tissue distribution, ubiquitously expressed. Highly expressed in spleen and leukocytes.

The protein resides in the endoplasmic reticulum membrane. In terms of biological role, aminopeptidase that plays a central role in peptide trimming, a step required for the generation of most HLA class I-binding peptides. Peptide trimming is essential to customize longer precursor peptides to fit them to the correct length required for presentation on MHC class I molecules. Preferentially hydrolyzes the basic residues Arg and Lys. The protein is Endoplasmic reticulum aminopeptidase 2 (ERAP2) of Homo sapiens (Human).